A 396-amino-acid polypeptide reads, in one-letter code: L-lactate dehydrogenase (396 aa).

Positions 1 to 380 (MIISAASDYR…SGDSLVQELG (380 aa)) constitute an FMN hydroxy acid dehydrogenase domain. Residue Tyr-24 participates in substrate binding. The FMN site is built by Ser-106 and Gln-127. Tyr-129 is a substrate binding site. Residue Thr-155 participates in FMN binding. Arg-164 contacts substrate. FMN is bound at residue Lys-251. The active-site Proton acceptor is His-275. Position 278 (Arg-278) interacts with substrate. 306–330 (DSGIRNGLDVVRMIALGADTVLLGR) lines the FMN pocket.

This sequence belongs to the FMN-dependent alpha-hydroxy acid dehydrogenase family. The cofactor is FMN.

It is found in the cell inner membrane. It carries out the reaction (S)-lactate + A = pyruvate + AH2. Functionally, catalyzes the conversion of L-lactate to pyruvate. Is coupled to the respiratory chain. The chain is L-lactate dehydrogenase from Salmonella choleraesuis (strain SC-B67).